A 339-amino-acid chain; its full sequence is D-erythrose-4-phosphate dehydrogenase (339 aa).

Position 12-13 (12-13) interacts with NAD(+); that stretch reads RI. Residues 154–156, arginine 200, 213–214, and arginine 236 each bind substrate; these read SCT and TK. The active-site Nucleophile is the cysteine 155. Asparagine 318 serves as a coordination point for NAD(+).

This sequence belongs to the glyceraldehyde-3-phosphate dehydrogenase family. Epd subfamily. In terms of assembly, homotetramer.

The protein resides in the cytoplasm. It carries out the reaction D-erythrose 4-phosphate + NAD(+) + H2O = 4-phospho-D-erythronate + NADH + 2 H(+). Its pathway is cofactor biosynthesis; pyridoxine 5'-phosphate biosynthesis; pyridoxine 5'-phosphate from D-erythrose 4-phosphate: step 1/5. Functionally, catalyzes the NAD-dependent conversion of D-erythrose 4-phosphate to 4-phosphoerythronate. The sequence is that of D-erythrose-4-phosphate dehydrogenase from Enterobacter sp. (strain 638).